A 300-amino-acid chain; its full sequence is Small ribosomal subunit protein uS2 (300 aa).

A disordered region spans residues 278-300 (GEAQTGNEGWGTEAAAPAATTQW).

The protein belongs to the universal ribosomal protein uS2 family. Component of the small ribosomal subunit. Mature ribosomes consist of a small (40S) and a large (60S) subunit. The 40S subunit contains about 33 different proteins and 1 molecule of RNA (18S). The 60S subunit contains about 49 different proteins and 3 molecules of RNA (25S, 5.8S and 5S). Interacts with rps21.

The protein localises to the cytoplasm. In terms of biological role, required for the assembly and/or stability of the 40S ribosomal subunit. Required for the processing of the 20S rRNA-precursor to mature 18S rRNA in a late step of the maturation of 40S ribosomal subunits. The sequence is that of Small ribosomal subunit protein uS2 (rps0) from Pyrenophora tritici-repentis (strain Pt-1C-BFP) (Wheat tan spot fungus).